We begin with the raw amino-acid sequence, 289 residues long: Thymidylate synthase (289 aa).

Residues Arg21 and 150-151 (RR) each bind dUMP. The active-site Nucleophile is Cys170. Residues 191 to 194 (RSGD), Asn202, and 232 to 234 (HIY) contribute to the dUMP site. Asp194 serves as a coordination point for (6R)-5,10-methylene-5,6,7,8-tetrahydrofolate. Ala288 is a (6R)-5,10-methylene-5,6,7,8-tetrahydrofolate binding site.

This sequence belongs to the thymidylate synthase family. Bacterial-type ThyA subfamily. Homodimer.

The protein resides in the cytoplasm. The catalysed reaction is dUMP + (6R)-5,10-methylene-5,6,7,8-tetrahydrofolate = 7,8-dihydrofolate + dTMP. Its pathway is pyrimidine metabolism; dTTP biosynthesis. Functionally, catalyzes the reductive methylation of 2'-deoxyuridine-5'-monophosphate (dUMP) to 2'-deoxythymidine-5'-monophosphate (dTMP) while utilizing 5,10-methylenetetrahydrofolate (mTHF) as the methyl donor and reductant in the reaction, yielding dihydrofolate (DHF) as a by-product. This enzymatic reaction provides an intracellular de novo source of dTMP, an essential precursor for DNA biosynthesis. This is Thymidylate synthase from Mycoplasmopsis synoviae (strain 53) (Mycoplasma synoviae).